The primary structure comprises 154 residues: Large-conductance mechanosensitive channel (154 aa).

2 consecutive transmembrane segments (helical) span residues 14 to 34 (VVDL…VNSL) and 86 to 106 (VFIN…FFVV).

It belongs to the MscL family. Homopentamer.

Its subcellular location is the cell membrane. Functionally, channel that opens in response to stretch forces in the membrane lipid bilayer. May participate in the regulation of osmotic pressure changes within the cell. The chain is Large-conductance mechanosensitive channel from Dehalococcoides mccartyi (strain CBDB1).